A 100-amino-acid polypeptide reads, in one-letter code: Small ribosomal subunit protein uS14c (100 aa).

Residues 1-31 (MARKSLIQREKKRQKLEQKYHSIRRSSKKEI) are disordered.

This sequence belongs to the universal ribosomal protein uS14 family. In terms of assembly, part of the 30S ribosomal subunit.

The protein localises to the plastid. It localises to the chloroplast. In terms of biological role, binds 16S rRNA, required for the assembly of 30S particles. This Solanum bulbocastanum (Wild potato) protein is Small ribosomal subunit protein uS14c.